A 445-amino-acid polypeptide reads, in one-letter code: Probable D-serine dehydratase (445 aa).

At K111 the chain carries N6-(pyridoxal phosphate)lysine.

This sequence belongs to the serine/threonine dehydratase family. DsdA subfamily. Pyridoxal 5'-phosphate is required as a cofactor.

The enzyme catalyses D-serine = pyruvate + NH4(+). In Burkholderia pseudomallei (strain 1710b), this protein is Probable D-serine dehydratase.